The primary structure comprises 191 residues: Phosphoheptose isomerase (191 aa).

An SIS domain is found at Ile-34–Ser-191. Asn-49–Gly-51 serves as a coordination point for substrate. Zn(2+) is bound by residues His-58 and Glu-62. Substrate is bound by residues Glu-62, Asn-91–Asp-92, Thr-117–Ser-119, Ser-122, and Gln-169. Zn(2+) contacts are provided by Gln-169 and His-177.

The protein belongs to the SIS family. GmhA subfamily. Requires Zn(2+) as cofactor.

It is found in the cytoplasm. It carries out the reaction 2 D-sedoheptulose 7-phosphate = D-glycero-alpha-D-manno-heptose 7-phosphate + D-glycero-beta-D-manno-heptose 7-phosphate. Its pathway is carbohydrate biosynthesis; D-glycero-D-manno-heptose 7-phosphate biosynthesis; D-glycero-alpha-D-manno-heptose 7-phosphate and D-glycero-beta-D-manno-heptose 7-phosphate from sedoheptulose 7-phosphate: step 1/1. In terms of biological role, catalyzes the isomerization of sedoheptulose 7-phosphate in D-glycero-D-manno-heptose 7-phosphate. The protein is Phosphoheptose isomerase of Aquifex aeolicus (strain VF5).